Reading from the N-terminus, the 352-residue chain is Isoflavone-7-O-methyltransferase 8 (352 aa).

118 to 127 (VLDPTLSGSY) contacts substrate. Residues Gly-196, Asp-219, Asp-239, Met-240, and Lys-253 each coordinate S-adenosyl-L-methionine. The Proton acceptor role is filled by His-257.

It belongs to the class I-like SAM-binding methyltransferase superfamily. Cation-independent O-methyltransferase family. COMT subfamily. In terms of assembly, homodimer.

It carries out the reaction a 7-hydroxyisoflavone + S-adenosyl-L-methionine = a 7-methoxyisoflavone + S-adenosyl-L-homocysteine + H(+). It participates in phytoalexin biosynthesis; medicarpin biosynthesis. Transfers a methyl group to 7-hydroxyls of the isoflavones daidzein, genistein and 6,7,4'-trihydroxyisoflavone. Can also methylate (+)6a-hydroxymaackiain with lower efficiency. The polypeptide is Isoflavone-7-O-methyltransferase 8 (Medicago sativa (Alfalfa)).